A 56-amino-acid polypeptide reads, in one-letter code: Protein hunchback (56 aa).

3 C2H2-type zinc fingers span residues 1 to 5, 11 to 33, and 39 to 56; these read HVRNH, HKCGKCNYSCVNKSMLNSHMKSH, and YRCADCTYATKYCHSLKL.

The protein belongs to the hunchback C2H2-type zinc-finger protein family.

The protein resides in the nucleus. Its function is as follows. Gap class segmentation protein that controls development of head structures. This chain is Protein hunchback (hb), found in Bithynia tentaculata (Spire snail).